We begin with the raw amino-acid sequence, 1412 residues long: MPN domain-containing protein CG4751 (1412 aa).

Residues methionine 1–aspartate 10 show a composition bias toward basic and acidic residues. The interval methionine 1–glycine 123 is disordered. Acidic residues-rich tracts occupy residues glycine 23–glycine 35 and serine 103–threonine 114. In terms of domain architecture, RAMA spans glutamate 113–cysteine 219. The region spanning isoleucine 284 to isoleucine 420 is the MPN domain. Residues histidine 361, histidine 363, and aspartate 374 each coordinate Zn(2+). 7 disordered regions span residues isoleucine 554 to serine 589, serine 669 to arginine 734, glycine 853 to lysine 891, serine 1027 to glutamine 1066, methionine 1271 to glycine 1318, serine 1330 to valine 1376, and leucine 1389 to aspartate 1412. Positions serine 572–leucine 600 form a coiled coil. Phosphoserine occurs at positions 699, 701, 705, 719, 723, and 728. Residues proline 702 to proline 720 are compositionally biased toward polar residues. 2 stretches are compositionally biased toward low complexity: residues lysine 873–lysine 891 and serine 1036–glutamine 1066. Over residues lysine 1275–serine 1290 the composition is skewed to polar residues. A phosphoserine mark is found at serine 1288 and serine 1290. Threonine 1297 carries the phosphothreonine modification. Over residues leucine 1360–leucine 1370 the composition is skewed to low complexity.

Belongs to the peptidase M67 family.

Functionally, probable protease. The polypeptide is MPN domain-containing protein CG4751 (Drosophila melanogaster (Fruit fly)).